Here is a 170-residue protein sequence, read N- to C-terminus: Tubulin polymerization-promoting protein family member 2 (170 aa).

A compositionally biased stretch (low complexity) spans 105 to 117 (TTGVTKSTTVGGV). Residues 105–170 (TTGVTKSTTV…GAGTYDKKNQ (66 aa)) are disordered. Positions 129–149 (THKERFDESGKGKGIEGREET) are enriched in basic and acidic residues.

This sequence belongs to the TPPP family. Only expressed in male reproductive organs, including testis. Expressed in elongating spermatids at stages IV-VIII of the seminiferous epithelial cycle in testis and in mature sperm in the epididymis.

Its subcellular location is the cytoplasm. The protein resides in the cytosol. It localises to the cell projection. It is found in the cilium. The protein localises to the flagellum. In terms of biological role, probable regulator of microtubule dynamics required for sperm motility. In contrast to other members of the family, has no microtubule bundling activity. This is Tubulin polymerization-promoting protein family member 2 from Mus musculus (Mouse).